Reading from the N-terminus, the 181-residue chain is Oligoribonuclease (181 aa).

In terms of domain architecture, Exonuclease spans 8–171 (LIWIDLEMTG…QDIQESIAEL (164 aa)). Residue tyrosine 129 is part of the active site.

Belongs to the oligoribonuclease family.

It is found in the cytoplasm. In terms of biological role, 3'-to-5' exoribonuclease specific for small oligoribonucleotides. This chain is Oligoribonuclease, found in Shewanella sp. (strain MR-4).